Reading from the N-terminus, the 547-residue chain is Glucose-6-phosphate isomerase (547 aa).

The Proton donor role is filled by Glu351. Residues His382 and Lys509 contribute to the active site.

The protein belongs to the GPI family.

The protein localises to the cytoplasm. It carries out the reaction alpha-D-glucose 6-phosphate = beta-D-fructose 6-phosphate. Its pathway is carbohydrate biosynthesis; gluconeogenesis. It functions in the pathway carbohydrate degradation; glycolysis; D-glyceraldehyde 3-phosphate and glycerone phosphate from D-glucose: step 2/4. In terms of biological role, catalyzes the reversible isomerization of glucose-6-phosphate to fructose-6-phosphate. This Coxiella burnetii (strain CbuG_Q212) (Coxiella burnetii (strain Q212)) protein is Glucose-6-phosphate isomerase.